Consider the following 356-residue polypeptide: MRVTDFSFELPESLIAHYPMPERSSCRLLSLDGPTGALTHGTFTDLLDKLNPGDLLVFNNTRVIPARLFGRKASGGKIEVLVERMLDDKRIFAHIRASKAPKPGAELLLGDDESINATMTARHGALFEVEFNDQRSVLDILNSIGHMPLPPYIDRPDEDADRELYQTVYSEKPGAVAAPTAGLHFDEPLLEKLRAKGVEMAFVTLHVGAGTFQPVRVDTIEDHIMHSEYAEVPQDVVDAVLAAKARGNRVIAVGTTSVRSLESAAQAAKNDLIEPFFDDTQIFIYPGFQYKVVDALVTNFHLPESTLIMLVSAFAGYQHTMNAYKAAVEEKYRFFSYGDAMFITYNPQAINERVGE.

This sequence belongs to the QueA family. As to quaternary structure, monomer.

Its subcellular location is the cytoplasm. It carries out the reaction 7-aminomethyl-7-carbaguanosine(34) in tRNA + S-adenosyl-L-methionine = epoxyqueuosine(34) in tRNA + adenine + L-methionine + 2 H(+). It functions in the pathway tRNA modification; tRNA-queuosine biosynthesis. Its function is as follows. Transfers and isomerizes the ribose moiety from AdoMet to the 7-aminomethyl group of 7-deazaguanine (preQ1-tRNA) to give epoxyqueuosine (oQ-tRNA). In Escherichia coli O81 (strain ED1a), this protein is S-adenosylmethionine:tRNA ribosyltransferase-isomerase.